Here is a 642-residue protein sequence, read N- to C-terminus: Kinesin-like protein KIN-7L (642 aa).

In terms of domain architecture, Kinesin motor spans 3 to 337; the sequence is KISVAVRFRP…LQFASRAKCV (335 aa). Over residues 12–27 the composition is skewed to low complexity; it reads PPTTAAPAADQSPSST. Positions 12–33 are disordered; that stretch reads PPTTAAPAADQSPSSTGGDREW. An ATP-binding site is contributed by 94-101; that stretch reads GQTSSGKT. Coiled-coil stretches lie at residues 343 to 428 and 540 to 612; these read VNEI…SNTS and RQQL…FSQA.

This sequence belongs to the TRAFAC class myosin-kinesin ATPase superfamily. Kinesin family. KIN-7 subfamily.

This chain is Kinesin-like protein KIN-7L, found in Oryza sativa subsp. japonica (Rice).